The primary structure comprises 227 residues: MKPAIVLLSGGLDSATVLAIAKAEGFAPAALTFRYGQRHAVEIRAAERVAAALGIRDHRIADIDLRVFGGSALTSDIAVPKGELDEAIPAGIPVTYVPARNTIMLSFALAFAEVLGAADIFVGVNAVDYSGYPDCRPDYIKAFEAMANLATKAAVEGTRLTIHTPLIDLTKGQIIRRGLDLGVDYSITSTCYDPTPDGKACGHCDSCRLRLKGFAEAGLADPAEYAS.

8–18 (LSGGLDSATVL) lines the ATP pocket. Residues Cys-191, Cys-201, Cys-204, and Cys-207 each coordinate Zn(2+).

Belongs to the QueC family. Requires Zn(2+) as cofactor.

It catalyses the reaction 7-carboxy-7-deazaguanine + NH4(+) + ATP = 7-cyano-7-deazaguanine + ADP + phosphate + H2O + H(+). The protein operates within purine metabolism; 7-cyano-7-deazaguanine biosynthesis. Its function is as follows. Catalyzes the ATP-dependent conversion of 7-carboxy-7-deazaguanine (CDG) to 7-cyano-7-deazaguanine (preQ(0)). This is 7-cyano-7-deazaguanine synthase from Paramagnetospirillum magneticum (strain ATCC 700264 / AMB-1) (Magnetospirillum magneticum).